The primary structure comprises 294 residues: Tissue factor (294 aa).

The signal sequence occupies residues 1–28; the sequence is MAILVRPRLLAALAPTFLGCLLLQVIAG. The Extracellular portion of the chain corresponds to 29–251; sequence AGIPEKAFNL…TEQWKSFLGE (223 aa). Residues Asn-37 and Asn-57 are each glycosylated (N-linked (GlcNAc...) asparagine). Cysteines 75 and 83 form a disulfide. 2 N-linked (GlcNAc...) asparagine glycosylation sites follow: Asn-169 and Asn-200. A disulfide bridge connects residues Cys-218 and Cys-241. The WKS motif signature appears at 245–247; that stretch reads WKS. Residues 252 to 274 traverse the membrane as a helical segment; the sequence is TLIIVGAVVLLATIFIILLSISL. Cys-275 is lipidated: S-palmitoyl cysteine. At 275-294 the chain is on the cytoplasmic side; the sequence is CKRRKNRAGQKGKNTPSRLA.

Belongs to the tissue factor family. In terms of assembly, interacts with HSPE; the interaction, inhibited by heparin, promotes the generation of activated factor X and activates coagulation in the presence of activated factor VII.

The protein localises to the membrane. Initiates blood coagulation by forming a complex with circulating factor VII or VIIa. The [TF:VIIa] complex activates factors IX or X by specific limited proteolysis. TF plays a role in normal hemostasis by initiating the cell-surface assembly and propagation of the coagulation protease cascade. The protein is Tissue factor (F3) of Mus musculus (Mouse).